Here is a 201-residue protein sequence, read N- to C-terminus: uncharacterized protein (201 aa).

This is an uncharacterized protein from Cestrum yellow leaf curling virus (CmYLCV).